Here is a 721-residue protein sequence, read N- to C-terminus: Polyribonucleotide nucleotidyltransferase (721 aa).

Residues Asp495 and Asp501 each coordinate Mg(2+). A KH domain is found at 562–621; the sequence is PRLLSFRIDPELIGTVIGPGGRTIKGITERTNTKIDIEDGGIVTIASHDGAAAEEAQKII. The S1 motif domain occupies 631–699; the sequence is GEIFPGVVTR…SRGRINLTLR (69 aa).

Belongs to the polyribonucleotide nucleotidyltransferase family. Mg(2+) is required as a cofactor.

It localises to the cytoplasm. It catalyses the reaction RNA(n+1) + phosphate = RNA(n) + a ribonucleoside 5'-diphosphate. In terms of biological role, involved in mRNA degradation. Catalyzes the phosphorolysis of single-stranded polyribonucleotides processively in the 3'- to 5'-direction. This chain is Polyribonucleotide nucleotidyltransferase, found in Prochlorococcus marinus subsp. pastoris (strain CCMP1986 / NIES-2087 / MED4).